The sequence spans 346 residues: uncharacterized protein (346 aa).

Belongs to the IIV-6 359L family.

This is an uncharacterized protein from Invertebrate iridescent virus 6 (IIV-6).